A 379-amino-acid chain; its full sequence is Putative 2-hydroxyacid dehydrogenase YGL185C (379 aa).

Residues 207 to 208 (SI), 291 to 293 (LGR), and Asp317 contribute to the NAD(+) site. Arg293 is an active-site residue. Residue Glu322 is part of the active site. His341 serves as the catalytic Proton donor. 341 to 344 (HLGS) is an NAD(+) binding site.

Belongs to the D-isomer specific 2-hydroxyacid dehydrogenase family.

The sequence is that of Putative 2-hydroxyacid dehydrogenase YGL185C from Saccharomyces cerevisiae (strain ATCC 204508 / S288c) (Baker's yeast).